Consider the following 121-residue polypeptide: uncharacterized protein (121 aa).

This is an uncharacterized protein from Microplitis demolitor (Parasitoid wasp).